The primary structure comprises 464 residues: UDP-N-acetylmuramate--L-alanine ligase (464 aa).

111–117 (GAHGKTT) is an ATP binding site.

Belongs to the MurCDEF family.

Its subcellular location is the cytoplasm. The catalysed reaction is UDP-N-acetyl-alpha-D-muramate + L-alanine + ATP = UDP-N-acetyl-alpha-D-muramoyl-L-alanine + ADP + phosphate + H(+). It participates in cell wall biogenesis; peptidoglycan biosynthesis. Its function is as follows. Cell wall formation. The chain is UDP-N-acetylmuramate--L-alanine ligase from Dictyoglomus turgidum (strain DSM 6724 / Z-1310).